The primary structure comprises 1160 residues: Pesticidal crystal protein Cry8Ca (1160 aa).

This sequence belongs to the delta endotoxin family.

Functionally, promotes colloidosmotic lysis by binding to the midgut epithelial cells of insects. Active on various scarabaeid beetles such as Anomala cuprea, A.rufocuprea and Popillia japonica. The chain is Pesticidal crystal protein Cry8Ca (cry8Ca) from Bacillus thuringiensis subsp. japonensis.